A 396-amino-acid chain; its full sequence is Ribosomal RNA large subunit methyltransferase I (396 aa).

In terms of domain architecture, PUA spans 2–81 (SVRLVLAKGR…ESIDIAFFSR (80 aa)).

This sequence belongs to the methyltransferase superfamily. RlmI family.

The protein localises to the cytoplasm. It catalyses the reaction cytidine(1962) in 23S rRNA + S-adenosyl-L-methionine = 5-methylcytidine(1962) in 23S rRNA + S-adenosyl-L-homocysteine + H(+). Its function is as follows. Specifically methylates the cytosine at position 1962 (m5C1962) of 23S rRNA. The polypeptide is Ribosomal RNA large subunit methyltransferase I (Escherichia coli (strain K12 / MC4100 / BW2952)).